The chain runs to 769 residues: Trehalose 6-phosphate phosphorylase (769 aa).

A substrate-binding site is contributed by 342–343 (WD). Glu480 functions as the Proton donor in the catalytic mechanism. 589-590 (KQ) provides a ligand contact to substrate.

The protein belongs to the glycosyl hydrolase 65 family. In terms of assembly, monomer.

It carries out the reaction alpha,alpha-trehalose 6-phosphate + phosphate = beta-D-glucose 1-phosphate + D-glucose 6-phosphate. In terms of biological role, catalyzes the conversion of trehalose 6-phosphate into glucose 1-phosphate and glucose 6-phosphate. The polypeptide is Trehalose 6-phosphate phosphorylase (trePP) (Lactococcus lactis subsp. lactis (strain IL1403) (Streptococcus lactis)).